The sequence spans 376 residues: uncharacterized protein (376 aa).

The N-terminal stretch at 1–31 (MSRHKVYKAISSYVIIAIIIIAIVAVVGVLL) is a signal peptide. Residues 37–57 (SSSSVTSTTTPTTSSSVSPSS) form a disordered region.

Belongs to the bacterial solute-binding protein 1 family. WtpA subfamily.

This is an uncharacterized protein from Sulfurisphaera tokodaii (strain DSM 16993 / JCM 10545 / NBRC 100140 / 7) (Sulfolobus tokodaii).